Reading from the N-terminus, the 582-residue chain is Aspartate--tRNA ligase (582 aa).

Glu174 contributes to the L-aspartate binding site. An aspartate region spans residues 198–201 (QITK). Arg220 serves as a coordination point for L-aspartate. ATP contacts are provided by residues 220-222 (RDE) and Gln229. His443 serves as a coordination point for L-aspartate. Residue Glu477 coordinates ATP. L-aspartate is bound at residue Arg484. 529–532 (GLDR) is a binding site for ATP.

It belongs to the class-II aminoacyl-tRNA synthetase family. Type 1 subfamily. Homodimer.

Its subcellular location is the cytoplasm. It carries out the reaction tRNA(Asp) + L-aspartate + ATP = L-aspartyl-tRNA(Asp) + AMP + diphosphate. Its function is as follows. Catalyzes the attachment of L-aspartate to tRNA(Asp) in a two-step reaction: L-aspartate is first activated by ATP to form Asp-AMP and then transferred to the acceptor end of tRNA(Asp). The sequence is that of Aspartate--tRNA ligase from Streptococcus pyogenes serotype M18 (strain MGAS8232).